The primary structure comprises 66 residues: Large ribosomal subunit protein bL33c (66 aa).

This sequence belongs to the bacterial ribosomal protein bL33 family.

The protein resides in the plastid. The protein localises to the chloroplast. The polypeptide is Large ribosomal subunit protein bL33c (Gossypium barbadense (Sea Island cotton)).